The following is a 199-amino-acid chain: MNKFIVFEGIDGCGKTTQAKLVAEKLNANFTFEPTDGKIGKSIREILAGSKCNKETLALLFAADRVEHVSKIEEDLKNAHVVSDRYVYSSIVYQMTQGIPKDFIYKINDYAKIPDLVVLLDVDLNEALKRMESREKEIFEKLEFQKKIKEGYYNLINSENGKFMPKYGFIVIDTTSKPIDQVFNEILNAIVDKIPDIIQ.

9 to 16 contacts ATP; the sequence is GIDGCGKT.

The protein belongs to the thymidylate kinase family.

It carries out the reaction dTMP + ATP = dTDP + ADP. The sequence is that of Probable thymidylate kinase from Methanococcus maripaludis (strain DSM 14266 / JCM 13030 / NBRC 101832 / S2 / LL).